Reading from the N-terminus, the 169-residue chain is Holo-[acyl-carrier-protein] synthase (169 aa).

Mg(2+)-binding residues include aspartate 8 and glutamate 50.

The protein belongs to the P-Pant transferase superfamily. AcpS family. Requires Mg(2+) as cofactor.

It is found in the cytoplasm. It catalyses the reaction apo-[ACP] + CoA = holo-[ACP] + adenosine 3',5'-bisphosphate + H(+). Transfers the 4'-phosphopantetheine moiety from coenzyme A to a Ser of acyl-carrier-protein. This is Holo-[acyl-carrier-protein] synthase from Thermotoga maritima (strain ATCC 43589 / DSM 3109 / JCM 10099 / NBRC 100826 / MSB8).